The sequence spans 1565 residues: Structure-specific endonuclease subunit SLX4 (1565 aa).

Positions 1-87 are disordered; it reads MVPESAPNGN…ENEYKLDATD (87 aa). The segment covering 7–24 has biased composition (polar residues); that stretch reads PNGNSQPLPSCFTTTGVP. Positions 43-58 are enriched in basic and acidic residues; it reads KRADPERLRHASEESP. Position 111 is a phosphoserine (S111). A Glycyl lysine isopeptide (Lys-Gly) (interchain with G-Cter in SUMO2) cross-link involves residue K115. UBZ4-type zinc fingers lie at residues 117 to 147 and 157 to 185; these read LFFCQMCQKNLSAMNVTRREQHVNRCLDEAE and IPDCPICGKPFLTTKSRISHLKQCAVRME. 6 residues coordinate Zn(2+): C120, C123, H138, C142, C160, and C163. A Glycyl lysine isopeptide (Lys-Gly) (interchain with G-Cter in SUMO2) cross-link involves residue K171. Zn(2+) is bound by residues H176 and C180. Disordered stretches follow at residues 203–242, 279–305, and 387–418; these read EVDGSPQVPSFSNNVGGLKRKGVTTKREPRRRKVNKPEAP, GAEKKSRKKRPPVCPPQLVTQDSETTG, and EPQLPLELPKQGEPSPRRPPASQSSLPVSHSP. Residues 220–236 are compositionally biased toward basic residues; sequence LKRKGVTTKREPRRRKV. K283 participates in a covalent cross-link: Glycyl lysine isopeptide (Lys-Gly) (interchain with G-Cter in SUMO2). Residues 296 to 305 show a composition bias toward polar residues; the sequence is LVTQDSETTG. Positions 499–1565 are interaction with PLK1 and TERF2-TERF2IP; the sequence is MVNNPHLSDV…PSGRKKKDQK (1067 aa). One can recognise a BTB domain in the interval 506–579; it reads SDVQFQLDSG…LYMADTDMPP (74 aa). K649 is covalently cross-linked (Glycyl lysine isopeptide (Lys-Gly) (interchain with G-Cter in SUMO2)). 7 disordered regions span residues 683-769, 789-848, 861-943, 963-989, 1063-1099, 1128-1212, and 1249-1337; these read RAAD…DPSF, GCKQ…SPSQ, PSVS…SPRA, DEELEHTKTESVSKDSPEGRKVPEFSP, PGVSRSRDCSSQTQIKSLKTRIPSDETAQQTPRPNLE, GRQA…MGDY, and SDDC…ITPM. Residues 715-730 show a composition bias toward basic and acidic residues; that stretch reads ENTEHMESSGLEKEEA. Polar residues predominate over residues 798–808; it reads PRVSSELSQIT. A compositionally biased stretch (basic and acidic residues) spans 809-822; the sequence is VDHEEQSDHVRETQ. Composition is skewed to low complexity over residues 833–848 and 861–875; these read SCSLVSQSSVDGSPSQ and PSVSQSHSSISRVAS. Phosphoserine is present on residues S845 and S875. The segment covering 877–894 has biased composition (polar residues); the sequence is RSLSPTTPTKQRRGSNIV. Residues K886, K898, and K925 each participate in a glycyl lysine isopeptide (Lys-Gly) (interchain with G-Cter in SUMO2) cross-link. 2 positions are modified to phosphoserine: S926 and S940. Basic and acidic residues predominate over residues 967–985; the sequence is EHTKTESVSKDSPEGRKVP. K983 participates in a covalent cross-link: Glycyl lysine isopeptide (Lys-Gly) (interchain with G-Cter in SUMO2). At S988 the chain carries Phosphoserine. An interaction with MUS81 region spans residues 1120–1413; that stretch reads ITLGAFDSGR…TTETCNPSRL (294 aa). The span at 1179 to 1189 shows a compositional bias: acidic residues; the sequence is DVVEVGDSDDE. S1249 and S1254 each carry phosphoserine. The segment covering 1285–1295 has biased composition (acidic residues); the sequence is LWDDWNEEEGQ. Residues K1349 and K1350 each participate in a glycyl lysine isopeptide (Lys-Gly) (interchain with G-Cter in SUMO2) cross-link. 2 disordered regions span residues 1381-1449 and 1546-1565; these read ESDS…SSKS and KEKLKHKRRQPSGRKKKDQK. S1384 carries the post-translational modification Phosphoserine. Over residues 1401-1412 the composition is skewed to polar residues; sequence QASTTETCNPSR. The tract at residues 1406 to 1565 is interaction with SLX1; sequence ETCNPSRLPT…PSGRKKKDQK (160 aa). Residues 1437 to 1449 show a composition bias toward low complexity; the sequence is SVDGSDNSFSSKS. Residues 1547-1565 show a composition bias toward basic residues; sequence EKLKHKRRQPSGRKKKDQK.

This sequence belongs to the SLX4 family. Forms a heterodimer with SLX1A/GIYD1. Interacts with ERCC4/XPF; catalytic subunit of the ERCC4-ERCC1 endonuclease. Interacts with MUS81; catalytic subunit of the MUS81-EME1 endonuclease. Interacts with MSH2; component of the MSH2-MSH3 mismatch repair complex. Interacts with TERF2-TERF2IP. Interacts with PLK1 and SLX4IP. As to expression, highly expressed in testis. Expressed in bone marrow, brain, thymus and weakly in heart, kidney and spleen.

The protein localises to the nucleus. In terms of biological role, regulatory subunit that interacts with and increases the activity of different structure-specific endonucleases. Has several distinct roles in protecting genome stability by resolving diverse forms of deleterious DNA structures originating from replication and recombination intermediates and from DNA damage. Component of the SLX1-SLX4 structure-specific endonuclease that resolves DNA secondary structures generated during DNA repair and recombination. Has endonuclease activity towards branched DNA substrates, introducing single-strand cuts in duplex DNA close to junctions with ss-DNA. Has a preference for 5'-flap structures, and promotes symmetrical cleavage of static and migrating Holliday junctions (HJs). Resolves HJs by generating two pairs of ligatable, nicked duplex products. Interacts with the structure-specific ERCC4-ERCC1 endonuclease and promotes the cleavage of bubble structures. Interacts with the structure-specific MUS81-EME1 endonuclease and promotes the cleavage of 3'-flap and replication fork-like structures. SLX4 is required for recovery from alkylation-induced DNA damage and is involved in the resolution of DNA double-strand breaks. This chain is Structure-specific endonuclease subunit SLX4 (Slx4), found in Mus musculus (Mouse).